The chain runs to 102 residues: MYAIIKHSGKQYKVSEGDLLNLDHFAAEKKSIVEITDVLAINDGSLKVGAPFVEGAKVVLEVVNEGKDKKVVIFKKRRRKDSKQKRGFRRQYTRVKVTSIVA.

It belongs to the bacterial ribosomal protein bL21 family. Part of the 50S ribosomal subunit. Contacts protein L20.

This protein binds to 23S rRNA in the presence of protein L20. The sequence is that of Large ribosomal subunit protein bL21 from Campylobacter hominis (strain ATCC BAA-381 / DSM 21671 / CCUG 45161 / LMG 19568 / NCTC 13146 / CH001A).